A 651-amino-acid polypeptide reads, in one-letter code: Transcription factor E2-alpha (651 aa).

Disordered regions lie at residues 32–107, 131–208, and 341–378; these read ANGK…SERN, LSLS…KTPS, and DHSS…ALSP. Composition is skewed to low complexity over residues 56 to 73, 131 to 148, and 341 to 354; these read SSGS…FDPS, LSLS…KSSS, and DHSS…PSTP. Phosphoserine occurs at positions 135 and 140. Residue Thr-353 is modified to Phosphothreonine. At Ser-357 the chain carries Phosphoserine. Residue Arg-369 is modified to Omega-N-methylarginine. At Ser-377 the chain carries Phosphoserine. The segment at 387 to 422 is leucine-zipper; the sequence is LSKMEDRLDEAIHVLRSHAVGTASDLHGLLPGHGAL. The disordered stretch occupies residues 457-549; the sequence is HNHASLPSQP…KAEREKERRV (93 aa). Low complexity predominate over residues 461–479; that stretch reads SLPSQPSSLPDLSQRPPDS. Residue Lys-496 forms a Glycyl lysine isopeptide (Lys-Gly) (interchain with G-Cter in SUMO2) linkage. Residue Ser-526 is modified to Phosphoserine. Asp-528 carries the phosphothreonine modification. Phosphoserine is present on Asp-533. Basic and acidic residues predominate over residues 539-549; that stretch reads QKAEREKERRV. One can recognise a bHLH domain in the interval 546-599; the sequence is ERRVANNARERLRVRDINEAFKELGRMCQLHLSSEKPQTKLLILHQAVAVILSL. Lys-622 participates in a covalent cross-link: Glycyl lysine isopeptide (Lys-Gly) (interchain with G-Cter in SUMO2).

In terms of assembly, homodimer. Heterodimer; efficient DNA binding requires dimerization with another bHLH protein. Forms a heterodimer with TWIST1 and TWIST2. Forms a heterodimer with NEUROD1; the heterodimer is inhibited in presence of ID2, but not NR0B2, to E-box element. Forms a heterodimer with TCF15; the heterodimer binds E-box element. Forms a heterodimer with MYOG; heterodimerization enhances MYOG DNA-binding and transcriptional activities. Forms a heterodimer with ATOH8; repress transcription of TCF3 and TCF3-NEUROG3 dimer-induced transactivation of E box-dependent promoters. Component of a nuclear TAL-1 complex composed at least of CBFA2T3, LDB1, TAL1 and TCF3. Interacts with NEUROD2. Interacts with EP300. Interacts with PTF1A, TGFB1I1 and UBE2I. Interacts with BHLHA9. Interacts with ASB2; the interaction is mediated by SKP2 and targets TCF3 for Notch-induced proteasomal degradation. Interacts with transcription factor ASCL5/AmeloD. As to quaternary structure, forms a heterodimer with ATOH7; required for ATOH7 DNA-binding. Interacts with RALGAPA1. Interacts with FIGLA. Post-translationally, phosphorylated following NGF stimulation. In terms of processing, undergoes Notch-induced ubiquitination and subsequent proteasomal degradation which is mediated by ASB1 or ASB2, the substrate-recognition components of probable ECS E3 ubiquitin-protein ligase complexes.

It is found in the nucleus. Functionally, transcriptional regulator involved in the initiation of neuronal differentiation and mesenchymal to epithelial transition. Heterodimers between TCF3 and tissue-specific basic helix-loop-helix (bHLH) proteins play major roles in determining tissue-specific cell fate during embryogenesis, like muscle or early B-cell differentiation. Together with TCF15, required for the mesenchymal to epithelial transition. Dimers bind DNA on E-box motifs: 5'-CANNTG-3'. Binds to the kappa-E2 site in the kappa immunoglobulin gene enhancer. Binds to IEB1 and IEB2, which are short DNA sequences in the insulin gene transcription control region. Its function is as follows. Facilitates ATOH7 binding to DNA at the consensus sequence 5'-CAGGTG-3', and positively regulates transcriptional activity. This Mus musculus (Mouse) protein is Transcription factor E2-alpha (Tcf3).